Here is a 100-residue protein sequence, read N- to C-terminus: UPF0213 protein YhbQ (100 aa).

A GIY-YIG domain is found at 2–77; sequence TPWFLYLIRT…KQLTKRQKER (76 aa).

This sequence belongs to the UPF0213 family.

The protein is UPF0213 protein YhbQ of Escherichia coli O1:K1 / APEC.